The sequence spans 762 residues: Dolichyl-phosphate-mannose--protein mannosyltransferase 4 (762 aa).

A compositionally biased stretch (basic residues) spans 1 to 10 (MSVPKKRNHG). Positions 1–24 (MSVPKKRNHGKLPPSTKDVDDPSL) are disordered. The Lumenal segment spans residues 1-53 (MSVPKKRNHGKLPPSTKDVDDPSLKYTKAAPKCEQVAEHWLLQPLPEPESRYS). Residues 54–74 (FWVTIVTLLAFAARFYKIWYP) form a helical membrane-spanning segment. Residues 75 to 136 (KEVVFDEVHF…IGYSYETHPA (62 aa)) are Cytoplasmic-facing. Residues 137 to 157 (PYIAYRSFNAILGTLTVPIMF) form a helical membrane-spanning segment. Residues 158 to 166 (NTLKELNFR) are Lumenal-facing. Residues 167-187 (AITCAFASLLVAIDTAHVTET) traverse the membrane as a helical segment. The Cytoplasmic segment spans residues 188–189 (RL). A helical membrane pass occupies residues 190–210 (ILLDAILIISIAATMYCYVRF). At 211-217 (YKCQLRQ) the chain is on the lumenal side. A helical membrane pass occupies residues 218–238 (PFTWSWYIWLHATGLSLSFVI). At 239-242 (STKY) the chain is on the cytoplasmic side. A helical transmembrane segment spans residues 243–263 (VGVMTYSAIGFAAVVNLWQLL). At 264–283 (DIKAGLSLRQFMRHFSKRLN) the chain is on the lumenal side. Residues 284–304 (GLVLIPFVIYLFWFWVHFTVL) traverse the membrane as a helical segment. Over 305–593 (NTSGPGDAFM…NGDEKKQIYF (289 aa)) the chain is Cytoplasmic. 3 MIR domains span residues 331–391 (SKTV…VLPP), 399–458 (GQAV…FQPL), and 464–521 (GHVL…VDEI). The chain crosses the membrane as a helical span at residues 594 to 614 (IGNIIGWWFQVISLAVFVGII). Residues 615-635 (VADLITRHRGYYALNKMTREK) lie on the Lumenal side of the membrane. Residues 636 to 656 (LYGPLMFFFVSWCCHYFPFFL) traverse the membrane as a helical segment. Topologically, residues 657–716 (MARQKFLHHYLPAHLIACLFSGALWEVIFSDCKSLDLEKDEDISGASYERNPKVYVKPYT) are cytoplasmic. Residues 717–737 (VFLVCVSCAVAWFFVYFSPLV) form a helical membrane-spanning segment. Over 738 to 762 (YGDVSLSPSEVVSREWFDIELNFSK) the chain is Lumenal. N759 carries an N-linked (GlcNAc...) asparagine glycan.

This sequence belongs to the glycosyltransferase 39 family. In terms of assembly, forms a functional homodimer and may form a heterodimer with PMT6. Interacts with RCR1.

Its subcellular location is the endoplasmic reticulum membrane. It carries out the reaction a di-trans,poly-cis-dolichyl beta-D-mannosyl phosphate + L-seryl-[protein] = 3-O-(alpha-D-mannosyl)-L-seryl-[protein] + a di-trans,poly-cis-dolichyl phosphate + H(+). The enzyme catalyses a di-trans,poly-cis-dolichyl beta-D-mannosyl phosphate + L-threonyl-[protein] = 3-O-(alpha-D-mannosyl)-L-threonyl-[protein] + a di-trans,poly-cis-dolichyl phosphate + H(+). The protein operates within protein modification; protein glycosylation. Protein O-mannosyltransferase involved in O-glycosylation which is essential for cell wall rigidity. Forms a homodimeric complex to transfer mannose from Dol-P-mannose to Ser or Thr residues on proteins. Specifically acts on secretory proteins with an ER-luminally oriented Ser/Thr-rich region flanked by a membrane anchor such as FUS1, AXL2, GAS1, KEX2, MID2, WSC1, WSC2, OPY2, PRM5, RAX2, or YNL176. In Saccharomyces cerevisiae (strain ATCC 204508 / S288c) (Baker's yeast), this protein is Dolichyl-phosphate-mannose--protein mannosyltransferase 4.